The chain runs to 388 residues: Leucine aminopeptidase 1 (388 aa).

Residues 1 to 19 (MKSLSLLALAAIAPPAAVA) form the signal peptide. A propeptide spanning residues 20-88 (AVVDHQVPFE…SVKSHERIQV (69 aa)) is cleaved from the precursor. An N-linked (GlcNAc...) asparagine glycan is attached at Asn180. Residues His188, Asp207, Glu246, and Asp273 each coordinate Zn(2+). The cysteines at positions 322 and 326 are disulfide-linked. Zn(2+) is bound at residue His355.

It belongs to the peptidase M28 family. M28E subfamily. Monomer. Zn(2+) is required as a cofactor.

The protein resides in the secreted. Functionally, extracellular aminopeptidase that allows assimilation of proteinaceous substrates. This Coccidioides posadasii (strain RMSCC 757 / Silveira) (Valley fever fungus) protein is Leucine aminopeptidase 1 (LAP1).